The following is a 394-amino-acid chain: tRNA-specific adenosine deaminase 1 (394 aa).

One can recognise an A to I editase domain in the interval 54–388 (SLGCGTKCIG…TKKPHELLDF (335 aa)). A Zn(2+)-binding site is contributed by H78. The active-site Proton donor is E80. Residues R84 and R85 each coordinate 1D-myo-inositol hexakisphosphate. Residues C127 and C191 each coordinate Zn(2+). Positions 194, 197, 320, 357, and 381 each coordinate 1D-myo-inositol hexakisphosphate.

Belongs to the ADAT1 family. 1D-myo-inositol hexakisphosphate is required as a cofactor. Widely expressed in early embryos, and later concentrates in the central nervous system.

The enzyme catalyses adenosine(37) in tRNA(Ala) + H2O + H(+) = inosine(37) in tRNA(Ala) + NH4(+). Its function is as follows. Specifically deaminates adenosine-37 to inosine in tRNA-Ala. In Drosophila melanogaster (Fruit fly), this protein is tRNA-specific adenosine deaminase 1.